A 33-amino-acid polypeptide reads, in one-letter code: Alpha-amanitin proprotein (33 aa).

A propeptide spanning residues 1 to 10 is cleaved from the precursor; the sequence is MSDINATRLP. At isoleucine 11 the chain carries (3R,4R)-4,5-dihydroxyisoleucine; in form alpha-amanitin. Isoleucine 11 is subject to (3R,4S)-4-hydroxyisoleucine; in form gamma-amanitin. The segment at residues 11 to 18 is a cross-link (cyclopeptide (Ile-Pro)); sequence IWGIGCNP. Residues 12–16 constitute a cross-link (2'-cysteinyl-6'-hydroxytryptophan sulfoxide (Trp-Cys)); sequence WGIGC. 4-hydroxyproline is present on proline 18. The propeptide occupies 19–33; that stretch reads SVGDEVTALLASGEA.

It belongs to the MSDIN fungal toxin family. Processed by the macrocyclase-peptidase enzyme POPB to yield a toxic cyclic decapeptide. POPB first removes 10 residues from the N-terminus. Conformational trapping of the remaining peptide forces the enzyme to release this intermediate rather than proceed to macrocyclization. The enzyme rebinds the remaining peptide in a different conformation and catalyzes macrocyclization of the N-terminal 8 residues.

Major toxin belonging to the bicyclic octapeptides amatoxins that acts by binding non-competitively to RNA polymerase II and greatly slowing the elongation of transcripts from target promoters. The sequence is that of Alpha-amanitin proprotein from Amanita rimosa.